The sequence spans 542 residues: Retron Ec83 probable ATPase (542 aa).

The short motif at 92–99 (GNNGCGKS) is the ATP-binding element.

Functionally, probable ATPase component of antiviral defense system retron Ec83, composed of a non-coding RNA (ncRNA), a reverse transcriptase (RT), this protein and a putative HNH endonuclease. Expression of retron Ec83 confers protection against bacteriophage T2, T4 and T6. At multiplicity of infection (MOI) of 0.02 cultures slow growth when infected with T4 but do not collapse, at MOI 2 cultures enter growth stasis. This is Retron Ec83 probable ATPase from Escherichia coli.